A 681-amino-acid polypeptide reads, in one-letter code: Macrolide export ATP-binding/permease protein MacB (681 aa).

In terms of domain architecture, ABC transporter spans 6-244 (LKLAAVTRRF…FAEVGVGAAA (239 aa)). 42–49 (GASGSGKS) is an ATP binding site. The interval 246-274 (TETAADTRSAPASGDAPPPANNDTAADPA) is disordered. The next 4 helical transmembrane spans lie at 306 to 326 (LLTM…VAVG), 554 to 574 (LTLL…IGVM), 611 to 631 (LVCL…GALF), and 644 to 664 (AGAI…FGFM).

Belongs to the ABC transporter superfamily. Macrolide exporter (TC 3.A.1.122) family. In terms of assembly, homodimer.

The protein resides in the cell inner membrane. Its function is as follows. Non-canonical ABC transporter that contains transmembrane domains (TMD), which form a pore in the inner membrane, and an ATP-binding domain (NBD), which is responsible for energy generation. Confers resistance against macrolides. This chain is Macrolide export ATP-binding/permease protein MacB, found in Burkholderia cenocepacia (strain HI2424).